We begin with the raw amino-acid sequence, 199 residues long: 7-methyl-GTP pyrophosphatase (199 aa).

The active-site Proton acceptor is D76.

This sequence belongs to the Maf family. YceF subfamily. A divalent metal cation is required as a cofactor.

Its subcellular location is the cytoplasm. The catalysed reaction is N(7)-methyl-GTP + H2O = N(7)-methyl-GMP + diphosphate + H(+). Functionally, nucleoside triphosphate pyrophosphatase that hydrolyzes 7-methyl-GTP (m(7)GTP). May have a dual role in cell division arrest and in preventing the incorporation of modified nucleotides into cellular nucleic acids. The polypeptide is 7-methyl-GTP pyrophosphatase (maf-2) (Brucella suis biovar 1 (strain 1330)).